Consider the following 468-residue polypeptide: Mitochondrial distribution and morphology protein 10 (468 aa).

Over residues 370–386 (ERDGLPGIQRDDHDMHH) the composition is skewed to basic and acidic residues. The disordered stretch occupies residues 370–394 (ERDGLPGIQRDDHDMHHHPQRPHAS).

This sequence belongs to the MDM10 family. In terms of assembly, component of the ER-mitochondria encounter structure (ERMES) or MDM complex, composed of MMM1, MDM10, MDM12 and MDM34. Associates with the mitochondrial outer membrane sorting assembly machinery SAM(core) complex.

The protein resides in the mitochondrion outer membrane. In terms of biological role, component of the ERMES/MDM complex, which serves as a molecular tether to connect the endoplasmic reticulum and mitochondria. Components of this complex are involved in the control of mitochondrial shape and protein biogenesis and may function in phospholipid exchange. MDM10 is involved in the late assembly steps of the general translocase of the mitochondrial outer membrane (TOM complex). Functions in the TOM40-specific route of the assembly of outer membrane beta-barrel proteins, including the association of TOM40 with the receptor TOM22 and small TOM proteins. Can associate with the SAM(core) complex as well as the MDM12-MMM1 complex, both involved in late steps of the major beta-barrel assembly pathway, that is responsible for biogenesis of all outer membrane beta-barrel proteins. May act as a switch that shuttles between both complexes and channels precursor proteins into the TOM40-specific pathway. Plays a role in mitochondrial morphology and in the inheritance of mitochondria. This chain is Mitochondrial distribution and morphology protein 10, found in Ajellomyces dermatitidis (strain ER-3 / ATCC MYA-2586) (Blastomyces dermatitidis).